Reading from the N-terminus, the 826-residue chain is Ribonucleoside-diphosphate reductase large subunit (826 aa).

Residues threonine 171, 186–187 (SC), glycine 217, 387–391 (NLCAE), and 594–598 (PTSGC) contribute to the substrate site. Residues cysteine 187 and cysteine 403 are joined by a disulfide bond. The active-site Proton acceptor is the asparagine 387. Cysteine 389 acts as the Cysteine radical intermediate in catalysis. The Proton acceptor role is filled by glutamate 391. Residues 747–769 (SVPREEQNERSPAEQMPPRPMEP) form a disordered region. The segment covering 749 to 758 (PREEQNERSP) has biased composition (basic and acidic residues).

The protein belongs to the ribonucleoside diphosphate reductase large chain family. Heterotetramer composed of a homodimer of the large subunit (R1) and a homodimer of the small subunit (R2). Larger multisubunit protein complex are also active, composed of (R1)n(R2)n.

It carries out the reaction a 2'-deoxyribonucleoside 5'-diphosphate + [thioredoxin]-disulfide + H2O = a ribonucleoside 5'-diphosphate + [thioredoxin]-dithiol. In terms of biological role, ribonucleoside-diphosphate reductase holoenzyme provides the precursors necessary for viral DNA synthesis. Allows virus growth in non-dividing cells, as well as reactivation from latency in infected hosts. Catalyzes the biosynthesis of deoxyribonucleotides from the corresponding ribonucleotides. The sequence is that of Ribonucleoside-diphosphate reductase large subunit from Homo sapiens (Human).